Here is a 347-residue protein sequence, read N- to C-terminus: Palmitoyltransferase ZDHHC19 (347 aa).

2 helical membrane-spanning segments follow: residues 29 to 49 (VFAA…FGFP) and 59 to 79 (WAFP…LVSL). The 51-residue stretch at 112–162 (EWCPKCLFHRPPRTYHCPWCNICVEDFDHHCKWVNNCIGHRNFRLFMLLVL) folds into the DHHC domain. The S-palmitoyl cysteine intermediate role is filled by Cys-142. The next 2 membrane-spanning stretches (helical) occupy residues 156–176 (LFML…VTCL) and 194–214 (AILV…LLLI). Residues 275–347 (IQEKTKPSPP…PTAEPAAGDP (73 aa)) form a disordered region.

It belongs to the DHHC palmitoyltransferase family.

It is found in the golgi apparatus membrane. Its subcellular location is the cytoplasm. The protein localises to the perinuclear region. The enzyme catalyses L-cysteinyl-[protein] + hexadecanoyl-CoA = S-hexadecanoyl-L-cysteinyl-[protein] + CoA. Palmitoyltransferase that mediates palmitoylation oproteins, such as RRAS and SQSTM1. Catalyzes palmitoylation of RRAS, leading to increased cell viability. Acts as a positive regulator of autophagy by mediating palmitoylation of SQSTM1, promoting affinity between SQSTM1 and ATG8 proteins and recruitment of ubiquitinated cargo proteins to autophagosomes. The sequence is that of Palmitoyltransferase ZDHHC19 (Zdhhc19) from Mus musculus (Mouse).